The following is a 431-amino-acid chain: Adenylosuccinate synthetase (431 aa).

GTP contacts are provided by residues 12-18 (GDEGKGK) and 40-42 (GHT). Residue D13 is the Proton acceptor of the active site. Mg(2+) contacts are provided by D13 and G40. IMP is bound by residues 13–16 (DEGK), 38–41 (NAGH), T130, R144, Q225, T240, and R304. H41 (proton donor) is an active-site residue. Residue 300 to 306 (STTGRPR) coordinates substrate. GTP-binding positions include R306, 332 to 334 (KMD), and 414 to 416 (SIG).

This sequence belongs to the adenylosuccinate synthetase family. Homodimer. Mg(2+) is required as a cofactor.

Its subcellular location is the cytoplasm. The enzyme catalyses IMP + L-aspartate + GTP = N(6)-(1,2-dicarboxyethyl)-AMP + GDP + phosphate + 2 H(+). Its pathway is purine metabolism; AMP biosynthesis via de novo pathway; AMP from IMP: step 1/2. Functionally, plays an important role in the de novo pathway of purine nucleotide biosynthesis. Catalyzes the first committed step in the biosynthesis of AMP from IMP. The polypeptide is Adenylosuccinate synthetase (Syntrophotalea carbinolica (strain DSM 2380 / NBRC 103641 / GraBd1) (Pelobacter carbinolicus)).